We begin with the raw amino-acid sequence, 547 residues long: Apolipoprotein N-acyltransferase (547 aa).

A run of 6 helical transmembrane segments spans residues 31–51 (PLPA…AAHA), 65–85 (GWLF…VSMH), 89–109 (GLAA…LALF), 144–164 (AACW…FPWL), 181–201 (LLGV…LAGL), and 215–235 (LAAG…QFSW). In terms of domain architecture, CN hydrolase spans 248–511 (VQGNVEQSQK…AGVLPVAVQG (264 aa)). Residue Glu-292 is the Proton acceptor of the active site. The active site involves Lys-366. Residue Cys-416 is the Nucleophile of the active site.

It belongs to the CN hydrolase family. Apolipoprotein N-acyltransferase subfamily.

The protein localises to the cell inner membrane. It carries out the reaction N-terminal S-1,2-diacyl-sn-glyceryl-L-cysteinyl-[lipoprotein] + a glycerophospholipid = N-acyl-S-1,2-diacyl-sn-glyceryl-L-cysteinyl-[lipoprotein] + a 2-acyl-sn-glycero-3-phospholipid + H(+). The protein operates within protein modification; lipoprotein biosynthesis (N-acyl transfer). Its function is as follows. Catalyzes the phospholipid dependent N-acylation of the N-terminal cysteine of apolipoprotein, the last step in lipoprotein maturation. The protein is Apolipoprotein N-acyltransferase of Bordetella bronchiseptica (strain ATCC BAA-588 / NCTC 13252 / RB50) (Alcaligenes bronchisepticus).